The chain runs to 523 residues: MTQNKLKLCSKANVYTEVPDGGWGWAVAVSFFFVEVFTYGIIKTFGVFFNDLMDSFNESNSRISWIISICVFVLTFSAPLATVLSNRFGHRLVVMLGGLLVSTGMVAASFSQEVSHMYVAIGIISGLGYCFSFLPTVTILSQYFGKRRSIVTAVASTGECFAVFAFAPAIMALKERIGWRYSLLFVGLLQLNIVIFGALLRPIFIRGPASPKIVIQENRKEAQYMLENEKTRTSIDSIDSGVELTTSPKNVPTHTNLELEPKADMQQVLVKTSPRPSEKKAPLLDFSILKEKSFICYALFGLFATLGFFAPSLYIIPLGISLGIDQDRAAFLLSTMAIAEVFGRIGAGFVLNREPIRKIYIELICVILLTVSLFAFTFATEFWGLMSCSIFFGFMVGTIGGTHIPLLAEDDVVGIEKMSSAAGVYIFIQSIAGLAGPPLAGLLVDQSKIYSRAFYSCAAGMALAAVCLALVRPCKMGLCQHHHSGETKVVSHRGKTLQDIPEDFLEMDLAKNEHRVHVQMEPV.

At 1–21 the chain is on the cytoplasmic side; that stretch reads MTQNKLKLCSKANVYTEVPDG. The chain crosses the membrane as a helical span at residues 22-42; it reads GWGWAVAVSFFFVEVFTYGII. Residues 43 to 62 are Extracellular-facing; sequence KTFGVFFNDLMDSFNESNSR. The helical transmembrane segment at 63–83 threads the bilayer; it reads ISWIISICVFVLTFSAPLATV. The Cytoplasmic portion of the chain corresponds to 84–91; the sequence is LSNRFGHR. The chain crosses the membrane as a helical span at residues 92-112; the sequence is LVVMLGGLLVSTGMVAASFSQ. Residues 113-118 lie on the Extracellular side of the membrane; sequence EVSHMY. A helical membrane pass occupies residues 119 to 139; sequence VAIGIISGLGYCFSFLPTVTI. The Cytoplasmic segment spans residues 140–149; sequence LSQYFGKRRS. The chain crosses the membrane as a helical span at residues 150–170; the sequence is IVTAVASTGECFAVFAFAPAI. Residues 171–184 are Extracellular-facing; sequence MALKERIGWRYSLL. A helical transmembrane segment spans residues 185-205; sequence FVGLLQLNIVIFGALLRPIFI. Topologically, residues 206–299 are cytoplasmic; that stretch reads RGPASPKIVI…KEKSFICYAL (94 aa). Phosphoserine is present on residues Ser-234, Ser-237, Ser-240, and Ser-247. A helical transmembrane segment spans residues 300–320; it reads FGLFATLGFFAPSLYIIPLGI. Residues 321–330 are Extracellular-facing; sequence SLGIDQDRAA. A helical transmembrane segment spans residues 331 to 351; sequence FLLSTMAIAEVFGRIGAGFVL. At 352-358 the chain is on the cytoplasmic side; the sequence is NREPIRK. A helical membrane pass occupies residues 359-379; sequence IYIELICVILLTVSLFAFTFA. Over 380–381 the chain is Extracellular; it reads TE. The chain crosses the membrane as a helical span at residues 382-402; the sequence is FWGLMSCSIFFGFMVGTIGGT. Residues 403-423 are Cytoplasmic-facing; that stretch reads HIPLLAEDDVVGIEKMSSAAG. The helical transmembrane segment at 424–444 threads the bilayer; that stretch reads VYIFIQSIAGLAGPPLAGLLV. Topologically, residues 445 to 452 are extracellular; it reads DQSKIYSR. A helical transmembrane segment spans residues 453 to 473; sequence AFYSCAAGMALAAVCLALVRP. Residues 474–523 are Cytoplasmic-facing; that stretch reads CKMGLCQHHHSGETKVVSHRGKTLQDIPEDFLEMDLAKNEHRVHVQMEPV.

The protein belongs to the major facilitator superfamily. Monocarboxylate porter (TC 2.A.1.13) family. As to quaternary structure, forms functional complexes with BSG/CD147 or EMB/GP70 ancillary proteins.

The protein localises to the basolateral cell membrane. It catalyses the reaction taurine(out) = taurine(in). Monocarboxylate transporter selective for taurine. May associate with BSG/CD147 or EMB/GP70 ancillary proteins to mediate facilitative efflux or influx of taurine across the plasma membrane. The transport is pH- and sodium-independent. Rather low-affinity, is likely effective for taurine transport in tissues where taurine is present at high concentrations. The polypeptide is Monocarboxylate transporter 7 (Homo sapiens (Human)).